The chain runs to 763 residues: Phosphoglycerol transferase I (763 aa).

4 consecutive transmembrane segments (helical) span residues 1–21 (MSEL…AWKA), 26–46 (WWFA…ITLY), 77–97 (ILPG…LGWI), and 108–128 (FGYS…SPAF).

This sequence belongs to the OpgB family.

The protein resides in the cell inner membrane. The catalysed reaction is a phosphatidylglycerol + a membrane-derived-oligosaccharide D-glucose = a 1,2-diacyl-sn-glycerol + a membrane-derived-oligosaccharide 6-(glycerophospho)-D-glucose.. It functions in the pathway glycan metabolism; osmoregulated periplasmic glucan (OPG) biosynthesis. Its function is as follows. Transfers a phosphoglycerol residue from phosphatidylglycerol to the membrane-bound nascent glucan backbones. This Escherichia fergusonii (strain ATCC 35469 / DSM 13698 / CCUG 18766 / IAM 14443 / JCM 21226 / LMG 7866 / NBRC 102419 / NCTC 12128 / CDC 0568-73) protein is Phosphoglycerol transferase I.